We begin with the raw amino-acid sequence, 408 residues long: Chaperonin GroEL (408 aa).

ATP is bound by residues 30-33 (TLGP), Lys51, and 87-91 (DGTTT).

It belongs to the chaperonin (HSP60) family. As to quaternary structure, forms a cylinder of 14 subunits composed of two heptameric rings stacked back-to-back. Interacts with the co-chaperonin GroES.

It localises to the cytoplasm. The catalysed reaction is ATP + H2O + a folded polypeptide = ADP + phosphate + an unfolded polypeptide.. Together with its co-chaperonin GroES, plays an essential role in assisting protein folding. The GroEL-GroES system forms a nano-cage that allows encapsulation of the non-native substrate proteins and provides a physical environment optimized to promote and accelerate protein folding. This chain is Chaperonin GroEL, found in Rickettsia rickettsii.